Consider the following 588-residue polypeptide: Probable G-protein coupled receptor 162 (588 aa).

Topologically, residues 1 to 17 (MARGGAGAEEASLRSNA) are extracellular. The helical transmembrane segment at 18–38 (LSWLACGLLALLANAWIILSI) threads the bilayer. Topologically, residues 39–49 (SAKQQKHKPLE) are cytoplasmic. The helical transmembrane segment at 50-70 (LLLCFLAGTHILMAAVPLTTF) threads the bilayer. Over 71–91 (AVVQLRRQASSDYDWNESICK) the chain is Extracellular. N86 carries an N-linked (GlcNAc...) asparagine glycan. The chain crosses the membrane as a helical span at residues 92 to 112 (VFVSTYYTLALATCFTVASLS). The Cytoplasmic portion of the chain corresponds to 113 to 133 (YHRMWMVRWPVNYRLSNAKKQ). Residues 134-154 (ALHAVMGIWMVSFILSTLPSI) form a helical membrane-spanning segment. At 155 to 174 (GWHNNGERYYARGCQFIVSK) the chain is on the extracellular side. A helical transmembrane segment spans residues 175–195 (IGLGFGVCFSLLLLGGIVMGL). The Cytoplasmic portion of the chain corresponds to 196–275 (VCVAITFYQT…SLQVTNLVSA (80 aa)). The helical transmembrane segment at 276-296 (IVFLYDSLTGVPILVVSFFSL) threads the bilayer. Residues 297–303 (KSDSAPP) lie on the Extracellular side of the membrane. A helical membrane pass occupies residues 304-324 (WMVLAVLWCSMAQTLLLPSFI). Over 325–588 (WSCERYRADV…GNPIFPQLTL (264 aa)) the chain is Cytoplasmic. A phosphoserine mark is found at S413 and S435. Disordered regions lie at residues 445–474 (QSRA…AEGG) and 511–550 (ETPL…AVGL). Residues 530 to 546 (PLGLSPRRLSLGSPESR) show a composition bias toward low complexity.

It belongs to the G-protein coupled receptor 1 family.

The protein localises to the cell membrane. In terms of biological role, orphan receptor. The protein is Probable G-protein coupled receptor 162 (GPR162) of Homo sapiens (Human).